Here is a 55-residue protein sequence, read N- to C-terminus: Large ribosomal subunit protein bL32c (55 aa).

The protein belongs to the bacterial ribosomal protein bL32 family.

It localises to the plastid. The protein resides in the chloroplast. The polypeptide is Large ribosomal subunit protein bL32c (Atropa belladonna (Belladonna)).